Consider the following 341-residue polypeptide: NADH-quinone oxidoreductase subunit H (341 aa).

8 consecutive transmembrane segments (helical) span residues 6–26 (LIVSYLVGFVLLNVLLGLMAY), 76–96 (LVFLVAPLLSFALAPLGAAVI), 118–138 (VAVLYVLALGSVGVYGIILGG), 157–177 (VISYELVLGLSLVGVFILSGS), 198–218 (LPNWYILSQPLAFALFLIAAV), 252–272 (FLAEYINMIVVSLLAATLFLG), 278–298 (FADGVWWLALKALFFLFFYVW), and 313–333 (GLAWKVLLPLALLNIGLTGLV).

It belongs to the complex I subunit 1 family. In terms of assembly, NDH-1 is composed of 14 different subunits. Subunits NuoA, H, J, K, L, M, N constitute the membrane sector of the complex.

Its subcellular location is the cell membrane. It carries out the reaction a quinone + NADH + 5 H(+)(in) = a quinol + NAD(+) + 4 H(+)(out). NDH-1 shuttles electrons from NADH, via FMN and iron-sulfur (Fe-S) centers, to quinones in the respiratory chain. The immediate electron acceptor for the enzyme in this species is believed to be ubiquinone. Couples the redox reaction to proton translocation (for every two electrons transferred, four hydrogen ions are translocated across the cytoplasmic membrane), and thus conserves the redox energy in a proton gradient. This subunit may bind ubiquinone. The polypeptide is NADH-quinone oxidoreductase subunit H (Thermomicrobium roseum (strain ATCC 27502 / DSM 5159 / P-2)).